The following is a 100-amino-acid chain: Small ribosomal subunit protein bS21 (100 aa).

The segment at 61–100 (KLQREGLLPMKPKPVFGAGPGGDRGRGPAAGAGAGPRGPR) is disordered. The segment covering 78-100 (AGPGGDRGRGPAAGAGAGPRGPR) has biased composition (gly residues).

This sequence belongs to the bacterial ribosomal protein bS21 family.

The chain is Small ribosomal subunit protein bS21 from Rhodopseudomonas palustris (strain BisB18).